The primary structure comprises 440 residues: 23S rRNA (uracil(1939)-C(5))-methyltransferase RlmD (440 aa).

A TRAM domain is found at 11–69; sequence STLDTKHQPVTIERLDHQGSGLAFLHKKPLFVDGALPGEEVLIQLTENKSKYARGQLIK. 4 residues coordinate [4Fe-4S] cluster: Cys-82, Cys-88, Cys-91, and Cys-169. Residues Gln-272, Phe-301, Asn-306, Glu-322, Asn-349, and Asp-370 each coordinate S-adenosyl-L-methionine. Cys-396 acts as the Nucleophile in catalysis.

It belongs to the class I-like SAM-binding methyltransferase superfamily. RNA M5U methyltransferase family. RlmD subfamily.

The enzyme catalyses uridine(1939) in 23S rRNA + S-adenosyl-L-methionine = 5-methyluridine(1939) in 23S rRNA + S-adenosyl-L-homocysteine + H(+). Functionally, catalyzes the formation of 5-methyl-uridine at position 1939 (m5U1939) in 23S rRNA. In Vibrio cholerae serotype O1 (strain ATCC 39541 / Classical Ogawa 395 / O395), this protein is 23S rRNA (uracil(1939)-C(5))-methyltransferase RlmD.